The sequence spans 66 residues: DNA-binding protein 7d (66 aa).

An N6-methyllysine; partial mark is found at Lys-5 and Lys-7.

It belongs to the 7 kDa DNA-binding/endoribonuclease P2 family. As to quaternary structure, monomer. Lys-5 was 70% monomethylated in form 7a, 25% in form 7b, and 20% in form 7d. Lys-7 was 50% monomethylated in form 7a, 40% in form 7b, and 50% in form 7d.

Its subcellular location is the cytoplasm. Functionally, can constrain negative DNA supercoils. May be involved in maintaining the integrity of the genome at high temperature. This chain is DNA-binding protein 7d, found in Sulfolobus acidocaldarius (strain ATCC 33909 / DSM 639 / JCM 8929 / NBRC 15157 / NCIMB 11770).